The sequence spans 31 residues: leu operon leader peptide (31 aa).

Functionally, involved in control of the biosynthesis of leucine. This Buchnera aphidicola subsp. Rhopalosiphum padi protein is leu operon leader peptide (leuL).